The sequence spans 806 residues: MAEPLKEEDGEDGSGEPPGRVKAEPVHTAASVVAKNLALLKARSFDVTFDVGDEYEIIETIGNGAYGVVSSARRRLTGQQVAIKKIPNAFDVVTNAKRTLRELKILKHFKHDNIIAIKDILKPTVPYGEFRSVYVVLDLMESDLHQIIHSSQPLTLEHVRYFLYQLLRGLKYMHSAQVIHRDLKPSNLLVNENCELKIGDFGMARGLCTSPAEHQYFMTEYVATRWYRAPELMLSLHEYTQAIDLWSVGCIFGEMLARRQLFPGKNYVHQLQLIMMVLGTPSPAVIQAVGAERVRAYIQSLPPRQPVPWETVYPGADRQALSLLGRMLRFEPSARISAAAALRHPFLAKYHDPDDEPDCAPPFDFAFDREALTRERIKEAIVAEIEDFHARREGIRQQIRFQPSLQPVASEPVCPDVEMPSPWAPSGDCAMESPPPALPPCSDPAPDTVDLTLQPAPPASELAPPKREGAISDNTKAALKAALLKSLRSRLRDGPSAPLEAPEPRKPVTAQERQREREEKRRRRQERAKEREKRRQERERKERGAGTLGGPSTDPLAGLVLSDNDRSLLERWTRMARPPAPAPAPAPAPAPAPSSAQPTSTPTGPVSQSTGPLQPAGSIPGPASQPVCPPPGPVPQPAGPIPAPLQTAPSTSLLASQSLVPPSGLPGSGAPEVLPYFPSGPPPPDPGLTPQPSTSESPDVNLVTQQLSKSQVEDPLPPVFSGTPKGSGAGYGVGFDLEEFLNQSFDMGVADGPQDGQADSASLSASLLADWLEGHGMNPADIESLQREIQMDSPMLLSDLPDLQEP.

Residues 1 to 23 (MAEPLKEEDGEDGSGEPPGRVKA) are disordered. Alanine 2 is subject to N-acetylalanine. Residues 2 to 77 (AEPLKEEDGE…VVSSARRRLT (76 aa)) form a required for cytoplasmic targeting region. One can recognise a Protein kinase domain in the interval 55-347 (YEIIETIGNG…AAAALRHPFL (293 aa)). ATP is bound by residues 61-69 (IGNGAYGVV) and lysine 84. The required for binding to MAP2K5 stretch occupies residues 78–139 (GQQVAIKKIP…FRSVYVVLDL (62 aa)). The necessary for oligomerization stretch occupies residues 140 to 406 (MESDLHQIIH…QQIRFQPSLQ (267 aa)). Aspartate 182 functions as the Proton acceptor in the catalytic mechanism. A TXY motif is present at residues 219 to 221 (TEY). Positions 407–806 (PVASEPVCPD…LSDLPDLQEP (400 aa)) are may not be required for kinase activity; required to stimulate MEF2C activity. 2 disordered regions span residues 424–473 (APSG…AISD) and 488–727 (RSRL…PKGS). A compositionally biased stretch (pro residues) spans 433 to 443 (SPPPALPPCSD). Composition is skewed to basic and acidic residues over residues 502-519 (PEPR…EREE), 527-544 (RAKE…KERG), and 563-573 (DNDRSLLERWT). The Nuclear localization signal signature appears at 505 to 539 (RKPVTAQERQREREEKRRRRQERAKEREKRRQERE). A compositionally biased stretch (pro residues) spans 578–592 (PPAPAPAPAPAPAPA). Residues 593 to 603 (PSSAQPTSTPT) are compositionally biased toward low complexity. The span at 627–643 (VCPPPGPVPQPAGPIPA) shows a compositional bias: pro residues. Polar residues predominate over residues 647-660 (TAPSTSLLASQSLV). A compositionally biased stretch (pro residues) spans 678–689 (PSGPPPPDPGLT). Over residues 693-710 (STSESPDVNLVTQQLSKS) the composition is skewed to polar residues. The residue at position 710 (serine 710) is a Phosphoserine. Threonine 723 is modified (phosphothreonine).

This sequence belongs to the protein kinase superfamily. CMGC Ser/Thr protein kinase family. MAP kinase subfamily. In terms of assembly, interacts with MAP2K5. Forms oligomers. Interacts with MEF2A, MEF2C and MEF2D; the interaction phosphorylates the MEF2s and enhances transcriptional activity of MEF2A, MEF2C but not MEF2D. Interacts with SGK1. Interacts with PML. Interacts (via N-terminal half) with HSP90AB1-CDC37 chaperone complex in resting cells; the interaction is MAP2K5-independent and prevents MAPK7 from ubiquitination and proteasomal degradation. Interacts with STUB1/CHIP; the interaction is enhanced in the presence of IGF1 or MAP2K5 and promotes STUB1/CHIP E3 ligase activity. Mg(2+) is required as a cofactor. Post-translationally, dually phosphorylated on Thr-219 and Tyr-221, which activates the enzyme. As to expression, detected in testis, brain, kidney, lung and heart. Detected in total embryo (at protein level).

It localises to the cytoplasm. The protein localises to the nucleus. Its subcellular location is the PML body. The catalysed reaction is L-seryl-[protein] + ATP = O-phospho-L-seryl-[protein] + ADP + H(+). It catalyses the reaction L-threonyl-[protein] + ATP = O-phospho-L-threonyl-[protein] + ADP + H(+). Its activity is regulated as follows. Activated by tyrosine and threonine phosphorylation. Activated in response to hyperosmolarity, hydrogen peroxide, and epidermal growth factor (EGF). In terms of biological role, plays a role in various cellular processes such as proliferation, differentiation and cell survival. The upstream activator of MAPK7 is the MAPK kinase MAP2K5. Upon activation, it translocates to the nucleus and phosphorylates various downstream targets including MEF2C. EGF activates MAPK7 through a Ras-independent and MAP2K5-dependent pathway. As part of the MAPK/ERK signaling pathway, acts as a negative regulator of apoptosis in cardiomyocytes via interaction with STUB1/CHIP and promotion of STUB1-mediated ubiquitination and degradation of ICER-type isoforms of CREM. May have a role in muscle cell differentiation. May be important for endothelial function and maintenance of blood vessel integrity. MAP2K5 and MAPK7 interact specifically with one another and not with MEK1/ERK1 or MEK2/ERK2 pathways. Phosphorylates SGK1 at Ser-78 and this is required for growth factor-induced cell cycle progression. Involved in the regulation of p53/TP53 by disrupting the PML-MDM2 interaction. The polypeptide is Mitogen-activated protein kinase 7 (Mapk7) (Mus musculus (Mouse)).